The primary structure comprises 292 residues: G1/S-specific cyclin-D3 (292 aa).

The region spanning 27-152 (VLQSLLRLEE…LVLGKLKWDL (126 aa)) is the Cyclin N-terminal domain. Positions 254–292 (SLREASQTSSSPAPKAPRGSSSQGPSQTSTPTDVTAIHL) are disordered. 2 positions are modified to phosphoserine: S264 and S279. Residues 272 to 285 (GSSSQGPSQTSTPT) show a composition bias toward low complexity. T283 is subject to Phosphothreonine.

Belongs to the cyclin family. Cyclin D subfamily. In terms of assembly, interacts with the CDK4 and CDK6 protein kinases to form a serine/threonine kinase holoenzyme complex. The cyclin subunit imparts substrate specificity to the complex. Interacts with ATF5. Interacts with EIF3K. Component of the ternary complex cyclin D/CDK4/CDKN1B required for nuclear translocation and modulation of CDK4-mediated kinase activity. Can form similar complexes with either CDKN1A or CDKN2A. In terms of processing, phosphorylation at Thr-283 by MAP kinases is required for ubiquitination and degradation by the DCX(AMBRA1) complex. Ubiquitinated by the DCX(AMBRA1) complex during the transition from G1 to S cell phase, leading to its degradation: ubiquitination is dependent on Thr-283 phosphorylation. The DCX(AMBRA1) complex represents the major regulator of CCND3 stability during the G1/S transition. Polyubiquitinated by the SCF(FBXL2) complex, leading to proteasomal degradation.

It is found in the nucleus. The protein localises to the cytoplasm. Functionally, regulatory component of the cyclin D3-CDK4 (DC) complex that phosphorylates and inhibits members of the retinoblastoma (RB) protein family including RB1 and regulates the cell-cycle during G(1)/S transition. Phosphorylation of RB1 allows dissociation of the transcription factor E2F from the RB/E2F complex and the subsequent transcription of E2F target genes which are responsible for the progression through the G(1) phase. Hypophosphorylates RB1 in early G(1) phase. Cyclin D-CDK4 complexes are major integrators of various mitogenenic and antimitogenic signals. Component of the ternary complex, cyclin D3/CDK4/CDKN1B, required for nuclear translocation and activity of the cyclin D-CDK4 complex. Shows transcriptional coactivator activity with ATF5 independently of CDK4. The protein is G1/S-specific cyclin-D3 of Homo sapiens (Human).